The primary structure comprises 273 residues: MPPRKAHTTRRTPAKKSGVRRRLLRLLVTGVPVLALCGVAWLWLESVRLTRIEIVGARQADPGELRRLAAVDSGAALFDLDPALIADRVARHPWVQAASVTRWPTGTLRIAVEERVPVVLQMDAGGRPLRYLDAEGYGMPPGRGPVPDVPLLYGVRGPAHPMRPLEDEPVRALLTTLAALEDPARALISEIVRAPDGEFWLYTTPAAGQRSVPVRLGREDFERRLRRLVAFWQQAVLTQPHKTFSLIDLRFANQIVVREEAHPSTQKSAMGHE.

Over 1 to 20 (MPPRKAHTTRRTPAKKSGVR) the chain is Cytoplasmic. A helical transmembrane segment spans residues 21-43 (RRLLRLLVTGVPVLALCGVAWLW). At 44-273 (LESVRLTRIE…STQKSAMGHE (230 aa)) the chain is on the periplasmic side. Residues 47-115 (VRLTRIEIVG…GTLRIAVEER (69 aa)) form the POTRA domain.

Belongs to the FtsQ/DivIB family. FtsQ subfamily.

Its subcellular location is the cell inner membrane. In terms of biological role, essential cell division protein. The sequence is that of Cell division protein FtsQ from Rhodothermus marinus (strain ATCC 43812 / DSM 4252 / R-10) (Rhodothermus obamensis).